We begin with the raw amino-acid sequence, 87 residues long: Small ribosomal subunit protein bS20 (87 aa).

Positions Met1–Ser26 are disordered.

It belongs to the bacterial ribosomal protein bS20 family.

Functionally, binds directly to 16S ribosomal RNA. The chain is Small ribosomal subunit protein bS20 from Yersinia enterocolitica serotype O:8 / biotype 1B (strain NCTC 13174 / 8081).